We begin with the raw amino-acid sequence, 298 residues long: MEGVIVPLVTPFKEDYSIDFEALEWHIEFLEDKGVHGIFTNSTTGEFTSLSFEEKKLLAEKGRELTSKAYYLVGTGSTNTFEVIELTKHAKDIGADATVIVSPYYCKLKDEAIFRHFSIVAERADIPIILYAIPSCANPINVEIVRKLALEHSNIIGIKASVDSLTYLGELLEVKEERKDFKVFTGLDQYFFTLLTLGGDGGIMACANFAPEIHLEIWNAFKEKNFRRAIELARELVRITKIYKIASSFASAVKLAMVAKGFPIRPVLRPPYVIDGEEVFNEIREIVEWRQMLRKESL.

Catalysis depends on charge relay system residues Thr-43 and Tyr-105. Tyr-131 serves as the catalytic Proton donor. Lys-159 functions as the Schiff-base intermediate with substrate in the catalytic mechanism.

The protein belongs to the DapA family. Homotetramer.

It localises to the cytoplasm. This is an uncharacterized protein from Pyrococcus furiosus (strain ATCC 43587 / DSM 3638 / JCM 8422 / Vc1).